We begin with the raw amino-acid sequence, 310 residues long: 4-hydroxyproline 2-epimerase (310 aa).

The active-site Proton acceptor is the C88. Substrate contacts are provided by residues 89–90 (GH), H208, and D232. C236 (proton donor) is an active-site residue. A substrate-binding site is contributed by 237 to 238 (GT).

Belongs to the proline racemase family.

It catalyses the reaction trans-4-hydroxy-L-proline = cis-4-hydroxy-D-proline. Its function is as follows. Catalyzes the epimerization of trans-4-hydroxy-L-proline (t4LHyp) to cis-4-hydroxy-D-proline (c4DHyp). Is likely involved in a degradation pathway that converts t4LHyp to alpha-ketoglutarate. Displays no proline racemase activity. This Burkholderia cenocepacia (strain ATCC BAA-245 / DSM 16553 / LMG 16656 / NCTC 13227 / J2315 / CF5610) (Burkholderia cepacia (strain J2315)) protein is 4-hydroxyproline 2-epimerase.